A 408-amino-acid chain; its full sequence is Multifunctional CCA protein (408 aa).

ATP is bound by residues Gly8 and Arg11. Gly8 and Arg11 together coordinate CTP. Asp21 and Asp23 together coordinate Mg(2+). Residues Arg91, Arg137, and Arg140 each contribute to the ATP site. The CTP site is built by Arg91, Arg137, and Arg140. Residues 228-329 (TGVHVLSVLE…LELLQSFDVY (102 aa)) form the HD domain.

This sequence belongs to the tRNA nucleotidyltransferase/poly(A) polymerase family. Bacterial CCA-adding enzyme type 1 subfamily. As to quaternary structure, monomer. Can also form homodimers and oligomers. Mg(2+) serves as cofactor. It depends on Ni(2+) as a cofactor.

The catalysed reaction is a tRNA precursor + 2 CTP + ATP = a tRNA with a 3' CCA end + 3 diphosphate. The enzyme catalyses a tRNA with a 3' CCA end + 2 CTP + ATP = a tRNA with a 3' CCACCA end + 3 diphosphate. Its function is as follows. Catalyzes the addition and repair of the essential 3'-terminal CCA sequence in tRNAs without using a nucleic acid template. Adds these three nucleotides in the order of C, C, and A to the tRNA nucleotide-73, using CTP and ATP as substrates and producing inorganic pyrophosphate. tRNA 3'-terminal CCA addition is required both for tRNA processing and repair. Also involved in tRNA surveillance by mediating tandem CCA addition to generate a CCACCA at the 3' terminus of unstable tRNAs. While stable tRNAs receive only 3'-terminal CCA, unstable tRNAs are marked with CCACCA and rapidly degraded. The protein is Multifunctional CCA protein of Pseudomonas syringae pv. syringae (strain B728a).